The sequence spans 154 residues: MGVGLSTLEQKLTEMITAPVEALGYELVGIEFIRGRTSTLRIYIDSEDGINVDDCADVSHQVSAVLDVEDPISVAYNLEVSSPGLDRPMFTADHYARFQGEEVALVLRMAVQNRRKWQGIIKAVDGEMITVTVEGKDEVFALSNIQKANLVPHF.

It belongs to the RimP family.

It localises to the cytoplasm. In terms of biological role, required for maturation of 30S ribosomal subunits. The protein is Ribosome maturation factor RimP of Salmonella agona (strain SL483).